A 622-amino-acid polypeptide reads, in one-letter code: Glutamyl-tRNA(Gln) amidotransferase subunit B, mitochondrial (622 aa).

The transit peptide at Met-1–His-54 directs the protein to the mitochondrion. A disordered region spans residues Lys-30–Leu-67. Low complexity predominate over residues Thr-57–Leu-67.

It belongs to the GatB/GatE family. GatB subfamily. As to quaternary structure, subunit of the heterotrimeric GatCAB amidotransferase (AdT) complex, composed of A, B and C subunits.

It is found in the mitochondrion. The catalysed reaction is L-glutamyl-tRNA(Gln) + L-glutamine + ATP + H2O = L-glutaminyl-tRNA(Gln) + L-glutamate + ADP + phosphate + H(+). Functionally, allows the formation of correctly charged Gln-tRNA(Gln) through the transamidation of misacylated Glu-tRNA(Gln) in the mitochondria. The reaction takes place in the presence of glutamine and ATP through an activated gamma-phospho-Glu-tRNA(Gln). This is Glutamyl-tRNA(Gln) amidotransferase subunit B, mitochondrial from Verticillium alfalfae (strain VaMs.102 / ATCC MYA-4576 / FGSC 10136) (Verticillium wilt of alfalfa).